The chain runs to 539 residues: GMP synthase [glutamine-hydrolyzing] (539 aa).

A Glutamine amidotransferase type-1 domain is found at 4–202; sequence KILILDFGSQ…VLQIAGAKPD (199 aa). Cys81 functions as the Nucleophile in the catalytic mechanism. Active-site residues include His176 and Glu178. Residues 203–395 form the GMPS ATP-PPase domain; it reads WIMSNHIEEA…LGLPPEMVYR (193 aa). 230-236 provides a ligand contact to ATP; the sequence is SGGVDSS.

Homodimer.

It catalyses the reaction XMP + L-glutamine + ATP + H2O = GMP + L-glutamate + AMP + diphosphate + 2 H(+). The protein operates within purine metabolism; GMP biosynthesis; GMP from XMP (L-Gln route): step 1/1. Functionally, catalyzes the synthesis of GMP from XMP. In Burkholderia ambifaria (strain ATCC BAA-244 / DSM 16087 / CCUG 44356 / LMG 19182 / AMMD) (Burkholderia cepacia (strain AMMD)), this protein is GMP synthase [glutamine-hydrolyzing].